A 533-amino-acid chain; its full sequence is Chromosomal replication initiator protein DnaA (533 aa).

The interval 1–72 (MNDFWQHCSA…DLARDFWNAP (72 aa)) is domain I, interacts with DnaA modulators. Residues 72 to 196 (PIEVQFVLDP…EAADSMYERS (125 aa)) form a domain II region. Residues 83–113 (AGQRSPAGATPLAPRAPLPSANPAPVAPGPA) are disordered. The span at 96-110 (PRAPLPSANPAPVAP) shows a compositional bias: pro residues. Positions 197–413 (KLNPVLTFDN…GALRKILAYS (217 aa)) are domain III, AAA+ region. ATP is bound by residues Gly-241, Gly-243, Lys-244, and Thr-245. The segment at 414-533 (KFHGREITIE…LHVLEQTLKG (120 aa)) is domain IV, binds dsDNA.

This sequence belongs to the DnaA family. Oligomerizes as a right-handed, spiral filament on DNA at oriC.

Its subcellular location is the cytoplasm. Functionally, plays an essential role in the initiation and regulation of chromosomal replication. ATP-DnaA binds to the origin of replication (oriC) to initiate formation of the DNA replication initiation complex once per cell cycle. Binds the DnaA box (a 9 base pair repeat at the origin) and separates the double-stranded (ds)DNA. Forms a right-handed helical filament on oriC DNA; dsDNA binds to the exterior of the filament while single-stranded (ss)DNA is stabiized in the filament's interior. The ATP-DnaA-oriC complex binds and stabilizes one strand of the AT-rich DNA unwinding element (DUE), permitting loading of DNA polymerase. After initiation quickly degrades to an ADP-DnaA complex that is not apt for DNA replication. Binds acidic phospholipids. The polypeptide is Chromosomal replication initiator protein DnaA (Burkholderia mallei (strain SAVP1)).